The following is a 434-amino-acid chain: Beta-phenylalanine transaminase (434 aa).

A (S)-3-amino-3-phenylpropanoate-binding site is contributed by Arg41. Residue 132-133 coordinates pyridoxal 5'-phosphate; the sequence is GT. Lys267 bears the N6-(pyridoxal phosphate)lysine mark. Thr300 contributes to the pyridoxal 5'-phosphate binding site.

This sequence belongs to the class-III pyridoxal-phosphate-dependent aminotransferase family. Homodimer. Pyridoxal 5'-phosphate serves as cofactor.

The enzyme catalyses (S)-3-amino-3-phenylpropanoate + 2-oxoglutarate = 3-oxo-3-phenylpropanoate + L-glutamate. It carries out the reaction (S)-3-amino-3-phenylpropanoate + pyruvate = 3-oxo-3-phenylpropanoate + L-alanine. Is inhibited by 2-aminooxyacetate (AOA), a mimic of beta-alanine and a known inhibitor of aminotransferases. Aminotransferase that acts exclusively on beta-amino acids and exhibits a broad substrate range in vitro, accepting meta-, para- and, to a lesser extent, ortho-substituted beta-phenylalanine derivatives as amino donors, and 2-oxoglutarate or pyruvate as amino acceptors. Is highly enantioselective toward (S)-beta-phenylalanine (is not active with (R)-beta-phenylalanine) and derivatives with different substituents on the phenyl ring, allowing the kinetic resolution of various racemic beta-amino acids to yield (R)-beta-amino acids with &gt;95% enantiomeric excess (ee). Highly prefers aromatic beta-amino acids over aliphatic beta-amino acids; cannot use beta-alanine or beta-glutamate as substrate. Is likely involved in the beta-phenylalanine degradation pathway that allows V.paradoxus strain CBF3 to use beta-phenylalanine as a sole nitrogen source. The chain is Beta-phenylalanine transaminase from Variovorax paradoxus.